A 222-amino-acid chain; its full sequence is Nucleoside triphosphate pyrophosphatase (222 aa).

Catalysis depends on aspartate 82, which acts as the Proton acceptor.

The protein belongs to the Maf family. A divalent metal cation is required as a cofactor.

It is found in the cytoplasm. The catalysed reaction is a ribonucleoside 5'-triphosphate + H2O = a ribonucleoside 5'-phosphate + diphosphate + H(+). It catalyses the reaction a 2'-deoxyribonucleoside 5'-triphosphate + H2O = a 2'-deoxyribonucleoside 5'-phosphate + diphosphate + H(+). Nucleoside triphosphate pyrophosphatase. May have a dual role in cell division arrest and in preventing the incorporation of modified nucleotides into cellular nucleic acids. The chain is Nucleoside triphosphate pyrophosphatase from Mycobacterium tuberculosis (strain ATCC 25177 / H37Ra).